The following is a 348-amino-acid chain: Phenylalanine--tRNA ligase alpha subunit (348 aa).

E259 contacts Mg(2+).

Belongs to the class-II aminoacyl-tRNA synthetase family. Phe-tRNA synthetase alpha subunit type 1 subfamily. In terms of assembly, tetramer of two alpha and two beta subunits. Mg(2+) is required as a cofactor.

The protein localises to the cytoplasm. The catalysed reaction is tRNA(Phe) + L-phenylalanine + ATP = L-phenylalanyl-tRNA(Phe) + AMP + diphosphate + H(+). This chain is Phenylalanine--tRNA ligase alpha subunit, found in Lacticaseibacillus casei (strain BL23) (Lactobacillus casei).